The primary structure comprises 426 residues: MAVIISSKVLLIQLFVLVLGSFSKLSHGELWLELPLPFDWPPAEIPLPDIPSPFDGPTFVLPPPSPLPSPPPPSPSPPPPSPSPPPPSTIPLIPPFTGGFLPPLPGSKLPDFAGLLPLIPNLPDVPPIGGGPPVNQPKPSSPSPLVKPPPPPPSPCKPSPPDQSAKQPPQPPPAKQPSPPPPPPPVKAPSPSPAKQPPPPPPPVKAPSPSPATQPPTKQPPPPPRAKKSPLLPPPPPVAYPPVMTPSPSPAAEPPIIAPFPSPPANPPLIPRRPAPPVVKPLPPLGKPPIVSGLVYCKSCNSYGVPTLLNASLLQGAVVKLICYGKKTMVQWATTDNKGEFRIMPKSLTTADVGKCKVYLVKSPNPNCNVPTNFNGGKSGGLLKPLLPPKQPITPAVVPVQPPMSDLYGVGPFIFEASSKMPCDKN.

A signal peptide spans 1–23; that stretch reads MAVIISSKVLLIQLFVLVLGSFS. Disordered regions lie at residues 56-109 and 121-254; these read GPTF…GSKL and NLPD…AAEP. Composition is skewed to pro residues over residues 60–94, 123–161, 168–224, and 231–254; these read VLPP…PLIP, PDVP…PSPP, PPQP…PPPP, and LLPP…AAEP. Tandem repeats lie at residues 69–73, 76–80, and 83–87. Residues 69–182 form a 4 X 5 AA repeats of S-P(4) region; sequence SPPPPSPSPP…PAKQPSPPPP (114 aa). Repeat unit 4 spans residues 178-182; it reads SPPPP. Asn-310 is a glycosylation site (N-linked (GlcNAc...) asparagine).

Pistil (stigma and style tissue).

The polypeptide is Pistil-specific extensin-like protein (Nicotiana tabacum (Common tobacco)).